The following is a 502-amino-acid chain: 4,4'-diapophytoene desaturase (4,4'-diaponeurosporene-forming) (502 aa).

5–17 contacts FAD; sequence VIGAGVTGLAAAA.

This sequence belongs to the carotenoid/retinoid oxidoreductase family. CrtN subfamily.

The catalysed reaction is 15-cis-4,4'-diapophytoene + 3 FAD + 3 H(+) = all-trans-4,4'-diaponeurosporene + 3 FADH2. It functions in the pathway carotenoid biosynthesis; staphyloxanthin biosynthesis; staphyloxanthin from farnesyl diphosphate: step 2/5. Involved in the biosynthesis of the yellow-orange carotenoid staphyloxanthin, which plays a role in the virulence via its protective function against oxidative stress. Catalyzes three successive dehydrogenation reactions that lead to the introduction of three double bonds into 4,4'-diapophytoene (dehydrosqualene), with 4,4'-diapophytofluene and 4,4'-diapo-zeta-carotene as intermediates, and 4,4'-diaponeurosporene (the major deep-yellow pigment in staphylococci strains) as the end product. This Staphylococcus aureus (strain MRSA252) protein is 4,4'-diapophytoene desaturase (4,4'-diaponeurosporene-forming).